The following is a 179-amino-acid chain: RNA pyrophosphohydrolase (179 aa).

Residues 6 to 149 (GYRANVGIVI…KKPIYEDMLK (144 aa)) form the Nudix hydrolase domain. The Nudix box signature appears at 38–59 (GGIDFGESELDALFRELNEEIG).

This sequence belongs to the Nudix hydrolase family. RppH subfamily. A divalent metal cation is required as a cofactor.

Functionally, accelerates the degradation of transcripts by removing pyrophosphate from the 5'-end of triphosphorylated RNA, leading to a more labile monophosphorylated state that can stimulate subsequent ribonuclease cleavage. In Ruthia magnifica subsp. Calyptogena magnifica, this protein is RNA pyrophosphohydrolase.